The sequence spans 176 residues: Nascent polypeptide-associated complex subunit alpha (176 aa).

Positions 14–78 (SKNEKKAREL…AKVDDFTQRL (65 aa)) constitute an NAC-A/B domain. The segment at 85–127 (LQQNEGVLPAGQDAVSKDPQSIQADMQAAADSATDKPSADDAV) is disordered. Residues 137–176 (LNADDIELVMQQAGVPRAKAAKALKEHDSDIVNAIMALSG) enclose the UBA domain.

It belongs to the NAC-alpha family. Part of the nascent polypeptide-associated complex (NAC), consisting of EGD2 and EGD1. NAC associates with ribosomes via EGD1.

Its subcellular location is the cytoplasm. It is found in the nucleus. Component of the nascent polypeptide-associated complex (NAC), a dynamic component of the ribosomal exit tunnel, protecting the emerging polypeptides from interaction with other cytoplasmic proteins to ensure appropriate nascent protein targeting. The NAC complex also promotes mitochondrial protein import by enhancing productive ribosome interactions with the outer mitochondrial membrane and blocks the inappropriate interaction of ribosomes translating non-secretory nascent polypeptides with translocation sites in the membrane of the endoplasmic reticulum. EGD2 may also be involved in transcription regulation. The sequence is that of Nascent polypeptide-associated complex subunit alpha (EGD2) from Kluyveromyces lactis (strain ATCC 8585 / CBS 2359 / DSM 70799 / NBRC 1267 / NRRL Y-1140 / WM37) (Yeast).